Reading from the N-terminus, the 296-residue chain is Large ribosomal subunit protein uL29m (296 aa).

Residues 1–19 constitute a mitochondrion transit peptide; that stretch reads MSITSIRALLRSAVSLART.

The protein belongs to the universal ribosomal protein uL29 family. Component of the mitochondrial large ribosomal subunit. Mature mitochondrial ribosomes consist of a small (37S) and a large (54S) subunit. The 37S subunit contains at least 33 different proteins and 1 molecule of RNA (15S). The 54S subunit contains at least 45 different proteins and 1 molecule of RNA (21S).

The protein localises to the mitochondrion. This is Large ribosomal subunit protein uL29m (MRPL4) from Lodderomyces elongisporus (strain ATCC 11503 / CBS 2605 / JCM 1781 / NBRC 1676 / NRRL YB-4239) (Yeast).